A 329-amino-acid chain; its full sequence is GTPase Obg (329 aa).

Residues 1-159 (MQFIDYAEIE…RWLRLELKLL (159 aa)) enclose the Obg domain. An OBG-type G domain is found at 160–328 (AEVGIIGLPN…LLQIVWQLLD (169 aa)). GTP-binding positions include 166 to 173 (GLPNAGKS), 191 to 195 (FTTLV), 213 to 216 (DIPG), 280 to 283 (NKMD), and 309 to 311 (SGV). 2 residues coordinate Mg(2+): Ser-173 and Thr-193.

It belongs to the TRAFAC class OBG-HflX-like GTPase superfamily. OBG GTPase family. As to quaternary structure, monomer. The cofactor is Mg(2+).

It is found in the cytoplasm. Its function is as follows. An essential GTPase which binds GTP, GDP and possibly (p)ppGpp with moderate affinity, with high nucleotide exchange rates and a fairly low GTP hydrolysis rate. Plays a role in control of the cell cycle, stress response, ribosome biogenesis and in those bacteria that undergo differentiation, in morphogenesis control. In Rippkaea orientalis (strain PCC 8801 / RF-1) (Cyanothece sp. (strain PCC 8801)), this protein is GTPase Obg.